The chain runs to 65 residues: Large ribosomal subunit protein uL29 (65 aa).

This sequence belongs to the universal ribosomal protein uL29 family.

The sequence is that of Large ribosomal subunit protein uL29 from Psychrobacter arcticus (strain DSM 17307 / VKM B-2377 / 273-4).